Here is a 770-residue protein sequence, read N- to C-terminus: MAQWNQLQQLDTRYLEQLHQLYSDSFPMELRQFLAPWIESQDWAYAASKESHATLVFHNLLGEIDQQYSRFLQESNVLYQHNLRRIKQFLQSRYLEKPMEIARIVARCLWEESRLLQTAATAAQQGGQANHPTAAVVTEKQQMLEQHLQDVRKRVQDLEQKMKVVENLQDDFDFNYKTLKSQGDMQDLNGNNQSVTRQKMQQLEQMLTALDQMRRSIVSELAGLLSAMEYVQKTLTDEELADWKRRQQIACIGGPPNICLDRLENWITSLAESQLQTRQQIKKLEELQQKVSYKGDPIVQHRPMLEERIVELFRNLMKSAFVVERQPCMPMHPDRPLVIKTGVQFTTKVRLLVKFPELNYQLKIKVCIDKDSGDVAALRGSRKFNILGTNTKVMNMEESNNGSLSAEFKHLTLREQRCGNGGRANCDASLIVTEELHLITFETEVYHQGLKIDLETHSLPVVVISNICQMPNAWASILWYNMLTNNPKNVNFFTKPPIGTWDQVAEVLSWQFSSTTKRGLSIEQLTTLAEKLLGPGVNYSGCQITWAKFCKENMAGKGFSFWVWLDNIIDLVKKYILALWNEGYIMGFISKERERAILSTKPPGTFLLRFSESSKEGGVTFTWVEKDISGKTQIQSVEPYTKQQLNNMSFAEIIMGYKIMDATNILVSPLVYLYPDIPKEEAFGKYCRPESQEHPEADPGSAAPYLKTKFICVTPTTCSNTIDLPMSPRTLDSLMQFGNNGEGAEPSAGGQFESLTFDMDLTSECATSPM.

At alanine 2 the chain carries N-acetylalanine. N6-acetyllysine occurs at positions 49 and 87. The Essential for nuclear import signature appears at 150–162 (DVRKRVQDLEQKM). Positions 580-670 (WNEGYIMGFI…DATNILVSPL (91 aa)) constitute an SH2 domain. Allysine; alternate is present on residues lysine 601, lysine 615, and lysine 631. N6-acetyllysine; alternate is present on residues lysine 601, lysine 615, and lysine 631. A Phosphotyrosine; by TYK2 modification is found at tyrosine 640. Residue lysine 685 is modified to Allysine; alternate. Lysine 685 bears the N6-acetyllysine; alternate mark. Tyrosine 705 is modified (phosphotyrosine; by FER and PTK6). Residue lysine 707 is modified to N6-acetyllysine. Threonine 714 is subject to Phosphothreonine. Serine 727 bears the Phosphoserine; by DYRK2, NLK, NEK6, IRAK1, RPS6KA5, ZIPK/DAPK3 and PKC/PRKCE mark.

The protein belongs to the transcription factor STAT family. In terms of assembly, forms a homodimer or a heterodimer with a related family member (at least STAT1). Component of a promoter-binding complex composed of STAT3, NFATC3 and NFATC4; complex formation is enhanced by calcineurin. Interacts with IL31RA, NCOA1, PELP1, SIPAR, SOCS7, STATIP1 and TMF1. Interacts with IL23R in presence of IL23. Interacts (via SH2 domain) with NLK. Interacts with ARL2BP; the interaction is enhanced by LIF and JAK1 expression. Interacts with KPNA4 and KPNA5; KPNA4 may be the primary mediator of nuclear import. Interacts with CAV2; the interaction is increased on insulin-induced tyrosine phosphorylation of CAV2 and leads to STAT3 activation. Interacts with ARL2BP; interaction is enhanced with ARL2. Interacts with NEK6. Binds to CDK9 when activated and nuclear. Interacts with BMX. Interacts with ZIPK/DAPK3. Interacts with PIAS3; the interaction occurs on stimulation by IL6, CNTF or OSM and inhibits the DNA binding activity of STAT3. In prostate cancer cells, interacts with PRKCE and promotes DNA binding activity of STAT3. Interacts with STMN3, antagonizing its microtubule-destabilizing activity. Interacts with the 'Lys-129' acetylated form of BIRC5/survivin. Interacts with FER. Interacts (via SH2 domain) with EIF2AK2/PKR (via the kinase catalytic domain). Interacts with FGFR4. Interacts with INPP5F; the interaction is independent of STAT3 Tyr-705 phosphorylation status. Interacts with OCIAD1. Interacts with OCIAD2. Interacts (unphosphorylated or phosphorylated at Ser-727) with PHB1. Interacts and may form heterodimers with NHLH1. Found in a complex with SLC39A6, SLC39A10 and with the 'Ser-727' phosphorylated form of STAT3 throughout mitosis. Interacts (when acetylated) with EP300 (via bromo domain); interaction takes place following STAT3 acetylation by EP300 and promotes enhanceosome assembly. Interacts (when acetylated) with BRD2 (via bromo domain); interaction promotes STAT3 recruitment to chromatin and T-helper Th17 cell differentiation. Interacts with FAM220A/SIPAR; the interaction occurs in both the nucleus and the cytoplasm, is enhanced by IL6 and promotes STAT3 dephosphorylation. Interacts in both unphosphorylated and phosphorylated forms with FAM220A but interacts preferentially in the phosphorylated form in the nucleus. Interacts with PTPN2; the interaction is promoted by FAM220A and leads to STAT3 dephosphorylation which negatively regulates STAT3 transcriptional activator activity. Activated through tyrosine phosphorylation by BMX. Tyrosine phosphorylated in response to IL6, IL11, CNTF, LIF, KITLG/SCF, CSF1, EGF, PDGF, IFN-alpha, LEP and OSM. Activated KIT promotes phosphorylation on tyrosine residues and subsequent translocation to the nucleus. Tyrosine phosphorylated in response to constitutively activated FGFR1, FGFR2, FGFR3 and FGFR4. Phosphorylated on serine upon DNA damage, probably by ATM or ATR. Serine phosphorylation is important for the formation of stable DNA-binding STAT3 homodimers and maximal transcriptional activity. ARL2BP may participate in keeping the phosphorylated state of STAT3 within the nucleus. Tyrosine phosphorylated upon stimulation with EGF. Upon LPS challenge, phosphorylated within the nucleus by IRAK1. Upon UV-A treatment, phosphorylated on Ser-727 by RPS6KA5. Dephosphorylation on tyrosine residues by PTPN2 negatively regulates IL6/interleukin-6 signaling. Phosphorylation at Tyr-705 by PTK6, isoform M2 of PKM (PKM2) or FER leads to an increase of its transcriptional activity. Phosphorylation at Tyr-705 is increased in the presence of calcineurin. Phosphorylation at Tyr-640 by TYK2 negatively regulates transcriptional activity. Post-translationally, acetylated on lysine residues by EP300/p300, promoting its activation. Acetylation at Lys-49 and Lys-87 by EP300/p300 promotes its activation. Acetylation at Lys-87 by EP300/p300 promotes its association with BRD2 and recruitment to chromatin. Deacetylated at Lys-49 and Lys-87 by HDAC1. Acetylation at Lys-685 by EP300/p300 promotes its homodimerization and activation. Deacetylated at Lys-685 by HDAC3. Acetylated on lysine residues by CREBBP. Deacetylation by LOXL3 leads to disrupt STAT3 dimerization and inhibit STAT3 transcription activity. Oxidation of lysine residues to allysine on STAT3 preferentially takes place on lysine residues that are acetylated. In terms of processing, some lysine residues are oxidized to allysine by LOXL3, leading to disrupt STAT3 dimerization and inhibit STAT3 transcription activity. Oxidation of lysine residues to allysine on STAT3 preferentially takes place on lysine residues that are acetylated. (Microbial infection) Phosphorylated on Tyr-705 in the presence of S.typhimurium SarA. As to expression, expressed in ventricular cardiomyocytes (at protein level). Expressed in the lung (at protein level). Expressed in the liver, spleen and kidney. Expressed in the liver.

It is found in the cytoplasm. It localises to the nucleus. Functionally, signal transducer and transcription activator that mediates cellular responses to interleukins, KITLG/SCF, LEP and other growth factors. Once activated, recruits coactivators, such as NCOA1 or MED1, to the promoter region of the target gene. May mediate cellular responses to activated FGFR1, FGFR2, FGFR3 and FGFR4. Upon activation of IL6ST/gp130 signaling by interleukin-6 (IL6), binds to the IL6-responsive elements identified in the promoters of various acute-phase protein genes. Activated by IL31 through IL31RA. Acts as a regulator of inflammatory response by regulating differentiation of naive CD4(+) T-cells into T-helper Th17 or regulatory T-cells (Treg): acetylation promotes its transcription activity and cell differentiation while deacetylation and oxidation of lysine residues by LOXL3 inhibits differentiation. Involved in cell cycle regulation by inducing the expression of key genes for the progression from G1 to S phase, such as CCND1. Mediates the effects of LEP on melanocortin production, body energy homeostasis and lactation. May play an apoptotic role by transctivating BIRC5 expression under LEP activation. Cytoplasmic STAT3 represses macroautophagy by inhibiting EIF2AK2/PKR activity. Plays a crucial role in basal beta cell functions, such as regulation of insulin secretion. Following JAK/STAT signaling activation and as part of a complex with NFATC3 and NFATC4, binds to the alpha-beta E4 promoter region of CRYAB and activates transcription in cardiomyocytes. Plays an important role in host defense in methicillin-resistant S.aureus lung infection by regulating the expression of the antimicrobial lectin REG3G. In Mus musculus (Mouse), this protein is Signal transducer and activator of transcription 3.